Here is a 199-residue protein sequence, read N- to C-terminus: MAEEQVLNTHNASILLSAANKSHYPQDDLPEIALAGRSNVGKSSFINTILGRKNLARTSSKPGKTQLLNFFNIDNKLRFVDVPGYGYAKVSKSERAKWGKMIEEYLTSRDNLRAVVSLVDLRHAPSKEDIQMYDFLKYYDIPVIVVATKADKIPRGKWNKHESVVKKALNFDKSDTFIVFSSVERIGIDDSWDAILEQV.

The EngB-type G domain maps to D28–V199. GTP is bound by residues G36–S43, G63–L67, D81–G84, T148–D151, and F180–S182. Mg(2+) contacts are provided by S43 and T65.

The protein belongs to the TRAFAC class TrmE-Era-EngA-EngB-Septin-like GTPase superfamily. EngB GTPase family. Requires Mg(2+) as cofactor.

In terms of biological role, necessary for normal cell division and for the maintenance of normal septation. The sequence is that of Probable GTP-binding protein EngB from Streptococcus pyogenes serotype M6 (strain ATCC BAA-946 / MGAS10394).